Here is a 154-residue protein sequence, read N- to C-terminus: TSET complex member tstD (154 aa).

This sequence belongs to the adaptor complexes small subunit family. Component of the TSET complex, a heterohexamer composed of tstA, tstB, tstC, tstD, tstE and tstF, which may act in plasma membrane turnover. tstA, tstB, tstC and tstD are likely to be the core complex members with tstE and tstF acting as associated scaffold proteins.

It is found in the cell membrane. The protein resides in the cytoplasm. The polypeptide is TSET complex member tstD (Dictyostelium discoideum (Social amoeba)).